The sequence spans 373 residues: 4-hydroxy-3-methylbut-2-en-1-yl diphosphate synthase (flavodoxin) (373 aa).

Residues C270, C273, C305, and E312 each contribute to the [4Fe-4S] cluster site.

It belongs to the IspG family. [4Fe-4S] cluster serves as cofactor.

It catalyses the reaction (2E)-4-hydroxy-3-methylbut-2-enyl diphosphate + oxidized [flavodoxin] + H2O + 2 H(+) = 2-C-methyl-D-erythritol 2,4-cyclic diphosphate + reduced [flavodoxin]. It functions in the pathway isoprenoid biosynthesis; isopentenyl diphosphate biosynthesis via DXP pathway; isopentenyl diphosphate from 1-deoxy-D-xylulose 5-phosphate: step 5/6. In terms of biological role, converts 2C-methyl-D-erythritol 2,4-cyclodiphosphate (ME-2,4cPP) into 1-hydroxy-2-methyl-2-(E)-butenyl 4-diphosphate. The chain is 4-hydroxy-3-methylbut-2-en-1-yl diphosphate synthase (flavodoxin) from Photorhabdus laumondii subsp. laumondii (strain DSM 15139 / CIP 105565 / TT01) (Photorhabdus luminescens subsp. laumondii).